We begin with the raw amino-acid sequence, 492 residues long: UDP-N-acetylmuramate--L-alanine ligase (492 aa).

126–132 (GTHGKTT) serves as a coordination point for ATP.

The protein belongs to the MurCDEF family.

It localises to the cytoplasm. The catalysed reaction is UDP-N-acetyl-alpha-D-muramate + L-alanine + ATP = UDP-N-acetyl-alpha-D-muramoyl-L-alanine + ADP + phosphate + H(+). Its pathway is cell wall biogenesis; peptidoglycan biosynthesis. In terms of biological role, cell wall formation. The polypeptide is UDP-N-acetylmuramate--L-alanine ligase (Serratia proteamaculans (strain 568)).